The following is a 330-amino-acid chain: HTH-type transcriptional regulator GanR (330 aa).

One can recognise an HTH lacI-type domain in the interval 2–57; it reads ATIKDIAQEAGFSISTVSRVLNNDESLSVPDETREKIYEAAEKLNYRKKTVRPLVK. The segment at residues 4-23 is a DNA-binding region (H-T-H motif); sequence IKDIAQEAGFSISTVSRVLN.

Negatively regulates the expression of the ganSPQAB operon. Inhibits transcription of the operon by binding to an operator in the promoter region. In the presence of galactobiose, GanR dissociates from the promoter, resulting in the expression of the gan operon. The polypeptide is HTH-type transcriptional regulator GanR (Bacillus subtilis (strain 168)).